The chain runs to 81 residues: MRKLALVPIQFYRYAISPLMASHCRFYPSCSCYAYEAIDNHGLLRGGWLSIRRLGRCHPWNPGGYDPVPAVPTSRSSSMAE.

This sequence belongs to the UPF0161 family.

It localises to the cell inner membrane. In terms of biological role, could be involved in insertion of integral membrane proteins into the membrane. In Pseudomonas syringae pv. tomato (strain ATCC BAA-871 / DC3000), this protein is Putative membrane protein insertion efficiency factor.